A 539-amino-acid chain; its full sequence is uncharacterized protein (539 aa).

Positions 34 to 63 are disordered; that stretch reads AASEVSPIPQERPTTSLRKPTPRVQRPATD. The next 11 helical transmembrane spans lie at 103–123, 141–161, 184–204, 244–264, 277–299, 325–345, 360–380, 399–419, 434–454, 470–490, and 496–516; these read FATP…TTVF, MTAT…LDTV, ILLL…GILL, GIFH…IFLN, FLGA…IIYI, LAVP…LVTF, VLST…AAAA, THVS…ILFL, VVAL…ADNT, IGGV…AIIL, and WGLY…AGVE.

Belongs to the multi antimicrobial extrusion (MATE) (TC 2.A.66.1) family.

The protein resides in the vacuole membrane. This is an uncharacterized protein from Schizosaccharomyces pombe (strain 972 / ATCC 24843) (Fission yeast).